A 68-amino-acid chain; its full sequence is UPF0434 protein BTH_I0741 (68 aa).

The protein belongs to the UPF0434 family.

In Burkholderia thailandensis (strain ATCC 700388 / DSM 13276 / CCUG 48851 / CIP 106301 / E264), this protein is UPF0434 protein BTH_I0741.